The following is a 61-amino-acid chain: Small ribosomal subunit protein uS14 (61 aa).

Residues cysteine 24, cysteine 27, cysteine 40, and cysteine 43 each contribute to the Zn(2+) site.

This sequence belongs to the universal ribosomal protein uS14 family. Zinc-binding uS14 subfamily. In terms of assembly, part of the 30S ribosomal subunit. Contacts proteins S3 and S10. Requires Zn(2+) as cofactor.

Its function is as follows. Binds 16S rRNA, required for the assembly of 30S particles and may also be responsible for determining the conformation of the 16S rRNA at the A site. The chain is Small ribosomal subunit protein uS14 from Sulfurimonas denitrificans (strain ATCC 33889 / DSM 1251) (Thiomicrospira denitrificans (strain ATCC 33889 / DSM 1251)).